The sequence spans 376 residues: Oligopeptide transport system permease protein OppC (376 aa).

Transmembrane regions (helical) follow at residues 46–66, 149–169, 173–193, 209–229, 242–262, 297–317, and 341–361; these read WAILFFLLIVVIVLLAIIVPL, FPLLGTNGLGIDIWTLLWASV, LWIAVVVAIIAMVFGTIYGAV, IIEIIDIVPSILWIIVLGATF, VIFTLIFVFWTWPATTTRIYI, LAVVFVSLIPAVIGYEASLVF, and VALILSSIVSFAVLTVAARTF. The 198-residue stretch at 169–366 folds into the ABC transmembrane type-1 domain; that stretch reads VAKSLWIAVV…AARTFANALN (198 aa).

It belongs to the binding-protein-dependent transport system permease family. OppBC subfamily. As to quaternary structure, the complex is composed of two ATP-binding proteins (OppD and OppF), two transmembrane proteins (OppB and OppC) and a solute-binding protein (OppA).

The protein resides in the cell membrane. Part of the ABC transporter complex OppABCDF involved in the uptake of oligopeptides. Probably responsible for the translocation of the substrate across the membrane. In Mycoplasma genitalium (strain ATCC 33530 / DSM 19775 / NCTC 10195 / G37) (Mycoplasmoides genitalium), this protein is Oligopeptide transport system permease protein OppC (oppC).